The following is a 381-amino-acid chain: Arrestin-C (381 aa).

Belongs to the arrestin family. As to quaternary structure, homodimer; disulfide-linked in response to retinal illumination. Interacts with CXCR4; the interaction is dependent on the C-terminal phosphorylation of CXCR4 and modulates the calcium ion mobilization activity of CXCR4. Interacts with GPR84. In terms of tissue distribution, inner and outer segments, and the inner plexiform regions of the retina.

The protein localises to the photoreceptor inner segment. It is found in the cell projection. Its subcellular location is the cilium. It localises to the photoreceptor outer segment. In terms of biological role, may play a role in an as yet undefined retina-specific signal transduction. Could bind to photoactivated-phosphorylated red/green opsins. The chain is Arrestin-C (Arr3) from Mus musculus (Mouse).